We begin with the raw amino-acid sequence, 1315 residues long: Chaoptin (1315 aa).

The first 29 residues, 1 to 29 (MGLEFFFKFGYAFLTITLMIMIWMSLARA), serve as a signal peptide directing secretion. Asn-77 carries an N-linked (GlcNAc...) (high mannose) asparagine; alternate glycan. Asn-77 is a glycosylation site (N-linked (GlcNAc...) (paucimannose) asparagine; alternate). LRR repeat units follow at residues 80–101 (KVFM…FLQS), 103–124 (GMYR…AFTG), 128–149 (SLWE…SLRH), 152–173 (KLRH…SFRG), 177–198 (SLQT…SFSG), 201–222 (ILET…VFVD), 226–247 (RLTR…ALGP), 250–271 (SLRT…ETYE), and 279–300 (NLDN…SFKY). The N-linked (GlcNAc...) (paucimannose) asparagine; alternate glycan is linked to Asn-267. Asn-267 carries an N-linked (GlcNAc...) (complex) asparagine; alternate glycan. Asn-305 is a glycosylation site (N-linked (GlcNAc...) (high mannose) asparagine; alternate). N-linked (GlcNAc...) (paucimannose) asparagine; alternate glycosylation occurs at Asn-305. LRR repeat units lie at residues 326–347 (RIRE…AFDS), 351–372 (SLQI…LFNN), 375–396 (VLRV…ETFN), 401–424 (TLLK…RNMT), 477–498 (GLKR…AFHE), 527–548 (SLQE…SFHF), 551–572 (NLRL…TFQG), 577–598 (KLEE…TFFD), 601–622 (ALRK…AFMN), 625–646 (ELEY…SFQN), 649–670 (KLEI…YFDQ), 676–696 (NLNV…SSWS), 708–729 (NIKI…YFRP), 733–754 (SLTH…VFGN), 757–778 (HLQW…AFKN), 781–802 (QLQL…IFKP), 805–826 (GLRI…LFYN), 828–849 (GMEK…SLSS), 854–875 (TLCE…DLSN), 879–900 (SLRY…VFAT), 903–924 (KLAV…SFMG), 928–948 (SLIK…IRLK), 949–970 (YLRE…LAHN), 973–994 (NLRM…TQAL), 996–1017 (HLRR…SFDG), 1021–1044 (DLEM…DSLP), and 1045–1066 (HLRS…PHLL). Residue Asn-361 is glycosylated (N-linked (GlcNAc...) (high mannose) asparagine). The N-linked (GlcNAc...) asparagine glycan is linked to Asn-422. N-linked (GlcNAc...) (high mannose) asparagine glycosylation occurs at Asn-680. N-linked (GlcNAc...) (high mannose) asparagine; alternate glycosylation is present at Asn-692. A glycan (N-linked (GlcNAc...) (paucimannose) asparagine; alternate) is linked at Asn-692. N-linked (GlcNAc...) (high mannose) asparagine glycosylation is present at Asn-718. Residue Asn-746 is glycosylated (N-linked (GlcNAc...) asparagine). The N-linked (GlcNAc...) (high mannose) asparagine glycan is linked to Asn-936. A glycan (N-linked (GlcNAc...) (paucimannose) asparagine) is linked at Asn-970. N-linked (GlcNAc...) (complex) asparagine glycosylation is present at Asn-1012. N-linked (GlcNAc...) (high mannose) asparagine glycans are attached at residues Asn-1122, Asn-1152, and Asn-1171. One can recognise an LRRCT domain in the interval 1211–1274 (TDLNCDCDLG…DDLRETRCEN (64 aa)).

The protein belongs to the chaoptin family. As to expression, expressed in photoreceptor cells and their axons in the adult retina, the ocellus and larval photoreceptor organ.

The protein resides in the cell membrane. Functionally, required for photoreceptor cell morphogenesis. Mediates homophilic cellular adhesion. This is Chaoptin (chp) from Drosophila melanogaster (Fruit fly).